Here is a 226-residue protein sequence, read N- to C-terminus: Urease accessory protein UreF (226 aa).

The protein belongs to the UreF family. As to quaternary structure, ureD, UreF and UreG form a complex that acts as a GTP-hydrolysis-dependent molecular chaperone, activating the urease apoprotein by helping to assemble the nickel containing metallocenter of UreC. The UreE protein probably delivers the nickel.

It is found in the cytoplasm. In terms of biological role, required for maturation of urease via the functional incorporation of the urease nickel metallocenter. The chain is Urease accessory protein UreF from Burkholderia ambifaria (strain MC40-6).